The primary structure comprises 354 residues: Glycerol-1-phosphate dehydrogenase [NAD(P)+] (354 aa).

NAD(+) contacts are provided by residues 103 to 107 (GRAVD) and 125 to 128 (TAAS). Aspartate 130 lines the substrate pocket. NAD(+) is bound at residue serine 134. Aspartate 176 lines the substrate pocket. 2 residues coordinate Zn(2+): aspartate 176 and histidine 255. Histidine 259 serves as a coordination point for substrate. Zn(2+) is bound at residue histidine 271.

The protein belongs to the glycerol-1-phosphate dehydrogenase family. Homodimer. It depends on Zn(2+) as a cofactor.

Its subcellular location is the cytoplasm. It carries out the reaction sn-glycerol 1-phosphate + NAD(+) = dihydroxyacetone phosphate + NADH + H(+). The catalysed reaction is sn-glycerol 1-phosphate + NADP(+) = dihydroxyacetone phosphate + NADPH + H(+). The protein operates within membrane lipid metabolism; glycerophospholipid metabolism. Its function is as follows. Catalyzes the NAD(P)H-dependent reduction of dihydroxyacetonephosphate (DHAP or glycerone phosphate) to glycerol 1-phosphate (G1P). The G1P thus generated is used as the glycerophosphate backbone of phospholipids in the cellular membranes of Archaea. The protein is Glycerol-1-phosphate dehydrogenase [NAD(P)+] of Cenarchaeum symbiosum (strain A).